A 535-amino-acid chain; its full sequence is Unconventional prefoldin RPB5 interactor 1 (535 aa).

At Met1 the chain carries N-acetylmethionine. Disordered stretches follow at residues 1 to 23, 223 to 330, 352 to 383, and 412 to 431; these read MEAP…PALV, LLGE…VGDN, KNTT…QELP, and SRSR…AAEF. Residues 7–18 show a composition bias toward pro residues; it reads ETPPDPSPPSAP. Composition is skewed to polar residues over residues 253-265 and 276-296; these read TNVN…TDSH and EPFS…SSSY. Acidic residues predominate over residues 299–320; sequence DDDDDDDDDDDDDNIDDDDGDN. Ser372 bears the Phosphoserine; by RPS6KB1 mark. Thr373 bears the Phosphothreonine mark. The span at 417 to 427 shows a compositional bias: polar residues; the sequence is NSVCSDTSESS. Ser442 carries the post-translational modification Phosphoserine.

Belongs to the RNA polymerase II subunit 5-mediating protein family. As to quaternary structure, homodimer. Component of the PAQosome complex which is responsible for the biogenesis of several protein complexes and which consists of R2TP complex members RUVBL1, RUVBL2, RPAP3 and PIH1D1, URI complex members PFDN2, PFDN6, PDRG1, UXT and URI1 as well as ASDURF, POLR2E and DNAAF10/WDR92. Interacts with POLR2E/RPB5, RUVBL2 and RUVBL1. Interacts with PFDN2, PFDN4 and STAP1; the interactions are phosphorylation-dependent and occur in a growth-dependent manner in the mitochondrion. Interacts with UXT. Interacts with PPP1CC; the interaction is phosphorylation-dependent and occurs in a growth factor-dependent manner. Interacts (via the middle C-terminal region) with GTF2F1 and GTF2F2. Interacts with DMAP1. Interacts with TSC1 and TSC2. Interacts with PRPF8 and EFTUD2 in a ZNHIT2-dependent manner. Post-translationally, phosphorylated. Phosphorylation occurs essentially on serine residues. Phosphorylation occurs in response to androgen treatment in prostate cancer cells in a mTOR-dependent manner. Phosphorylated; hyperhosphorylated in mitochondria in a mTORC-dependent signaling pathway. Phosphorylated at Ser-372 by RPS6KB1 in a growth factor- and rapamycin-dependent manner. S6K1-mediated mitochondrial phosphorylation at Ser-372 disrupts the URI1-PPP1CC complex in the mitochondrion, relieves PPP1CC phosphatase inhibition activity and hence engages a negative feedback diminishing RPS6KB1 kinase activity, preventing sustained S6K1-dependent signaling. As to expression, ubiquitous. Expressed in ovarian cancers (at protein level). Expressed strongly in skeletal muscle. Expressed weakly in brain, heart, pancreas and in prostate epithelial cells.

The protein resides in the nucleus. It localises to the cytoplasm. It is found in the mitochondrion. The protein localises to the cell projection. Its subcellular location is the dendrite. Its function is as follows. Involved in gene transcription regulation. Acts as a transcriptional repressor in concert with the corepressor UXT to regulate androgen receptor (AR) transcription. May act as a tumor suppressor to repress AR-mediated gene transcription and to inhibit anchorage-independent growth in prostate cancer cells. Required for cell survival in ovarian cancer cells. Together with UXT, associates with chromatin to the NKX3-1 promoter region. Antagonizes transcriptional modulation via hepatitis B virus X protein. Functionally, plays a central role in maintaining S6K1 signaling and BAD phosphorylation under normal growth conditions thereby protecting cells from potential deleterious effects of sustained S6K1 signaling. The URI1-PPP1CC complex acts as a central component of a negative feedback mechanism that counteracts excessive S6K1 survival signaling to BAD in response to growth factors. Mediates inhibition of PPP1CC phosphatase activity in mitochondria. Coordinates the regulation of nutrient-sensitive gene expression availability in a mTOR-dependent manner. Seems to be a scaffolding protein able to assemble a prefoldin-like complex that contains PFDs and proteins with roles in transcription and ubiquitination. This Homo sapiens (Human) protein is Unconventional prefoldin RPB5 interactor 1 (URI1).